A 495-amino-acid polypeptide reads, in one-letter code: Tripartite motif-containing protein 5 (495 aa).

Residue A2 is modified to N-acetylalanine. Residues 15–60 form an RING-type zinc finger; it reads CPICLELLTEPLSLHCGHSFCQACITANHKKSMLYKEGERSCPVCR. A Phosphoserine modification is found at S87. The B box-type zinc-finger motif lies at 92-133; the sequence is QKVDHCARHGEKLLLFCQEDRKVICWLCERSQEHRGHHTFLM. Zn(2+) is bound by residues C97, H100, C119, and H125. Residues 137-225 are a coiled coil; the sequence is AQEYHVKLQT…LTKSETEMVQ (89 aa). Residues 187–200 form a required for interaction with GABARAP and for autophagy region; the sequence is FEQLREILDWEESN. The B30.2/SPRY domain maps to 283–495; the sequence is LKGILDMFRE…VPMTLCSPSS (213 aa).

It belongs to the TRIM/RBCC family. Can form homodimers and homotrimers. In addition to lower-order dimerization, also exhibits a higher-order multimerization and both low- and high-order multimerizations are essential for its restriction activity. Interacts with BTBD1 and BTBD2. Interacts with PSMC4, PSMC5, PSMD7 and HSPA8/HSC70. Interacts (via B30.2/SPRY domain) with HSPA1A/B. Interacts with PSMC2, MAP3K7/TAK1, TAB2 and TAB3. Interacts with SQSTM1. Interacts with TRIM6 and TRIM34. Interacts with ULK1 (phosphorylated form), GABARAP, GABARAPL1, GABARAPL2, MAP1LC3A, MAP1LC3C and BECN1. Degraded in a proteasome-independent fashion in the absence of viral infection but in a proteasome-dependent fashion following exposure to restriction sensitive virus. Post-translationally, autoubiquitinated in a RING finger- and UBE2D2-dependent manner. Monoubiquitinated by TRIM21. Deubiquitinated by Yersinia YopJ. Ubiquitination may not lead to proteasomal degradation.

The protein localises to the cytoplasm. It localises to the nucleus. The enzyme catalyses S-ubiquitinyl-[E2 ubiquitin-conjugating enzyme]-L-cysteine + [acceptor protein]-L-lysine = [E2 ubiquitin-conjugating enzyme]-L-cysteine + N(6)-ubiquitinyl-[acceptor protein]-L-lysine.. The protein operates within protein modification; protein ubiquitination. In terms of biological role, capsid-specific restriction factor that prevents infection from non-host-adapted retroviruses. Blocks viral replication early in the life cycle, after viral entry but before reverse transcription. In addition to acting as a capsid-specific restriction factor, also acts as a pattern recognition receptor that activates innate immune signaling in response to the retroviral capsid lattice. Binding to the viral capsid triggers its E3 ubiquitin ligase activity, and in concert with the heterodimeric ubiquitin conjugating enzyme complex UBE2V1-UBE2N (also known as UBC13-UEV1A complex) generates 'Lys-63'-linked polyubiquitin chains, which in turn are catalysts in the autophosphorylation of the MAP3K7/TAK1 complex (includes TAK1, TAB2, and TAB3). Activation of the MAP3K7/TAK1 complex by autophosphorylation results in the induction and expression of NF-kappa-B and MAPK-responsive inflammatory genes, thereby leading to an innate immune response in the infected cell. Plays a role in regulating autophagy through activation of autophagy regulator BECN1 by causing its dissociation from its inhibitors BCL2 and TAB2. This chain is Tripartite motif-containing protein 5 (TRIM5), found in Pygathrix nemaeus (Red-shanked douc langur).